A 294-amino-acid polypeptide reads, in one-letter code: Probable 2-(5''-triphosphoribosyl)-3'-dephosphocoenzyme-A synthase (294 aa).

The protein belongs to the CitG/MdcB family.

The enzyme catalyses 3'-dephospho-CoA + ATP = 2'-(5''-triphospho-alpha-D-ribosyl)-3'-dephospho-CoA + adenine. This chain is Probable 2-(5''-triphosphoribosyl)-3'-dephosphocoenzyme-A synthase, found in Streptococcus pyogenes serotype M18 (strain MGAS8232).